The chain runs to 1033 residues: Phospholipid-transporting ATPase neo1 (1033 aa).

Helical transmembrane passes span 133-153, 274-294, 317-337, and 344-364; these read LKIG…LITL, TLWA…VYTG, INFY…GLTF, and DWYI…PINL. The 4-aspartylphosphate intermediate role is filled by Asp408. ATP contacts are provided by Asp408, Lys409, Thr410, Glu491, Phe528, Ser530, Lys533, Lys551, Arg580, Thr581, Thr662, Gly663, Asp664, Arg744, and Lys750. Asp408 lines the Mg(2+) pocket. Thr410 contributes to the Mg(2+) binding site. Transmembrane regions (helical) follow at residues 768–788, 843–863, 913–933, 939–959, 965–985, and 992–1012; these read IGDG…IGIV, VVYS…LLLV, VLIS…LIGF, MLAV…ALQI, TIVM…PFLT, and FLLG…SLLP. Asp770 provides a ligand contact to Mg(2+). Asn773 and Asp774 together coordinate ATP. Residue Asp774 coordinates Mg(2+).

This sequence belongs to the cation transport ATPase (P-type) (TC 3.A.3) family. Type IV subfamily. In terms of assembly, functions without a CDC50/LEM3 family accessory subunit. Requires Mg(2+) as cofactor.

It localises to the endosome membrane. The protein localises to the golgi apparatus membrane. The catalysed reaction is ATP + H2O + phospholipidSide 1 = ADP + phosphate + phospholipidSide 2.. It carries out the reaction a 1,2-diacyl-sn-glycero-3-phospho-L-serine(out) + ATP + H2O = a 1,2-diacyl-sn-glycero-3-phospho-L-serine(in) + ADP + phosphate + H(+). The enzyme catalyses a 1,2-diacyl-sn-glycero-3-phosphoethanolamine(out) + ATP + H2O = a 1,2-diacyl-sn-glycero-3-phosphoethanolamine(in) + ADP + phosphate + H(+). Flippase that catalyzes the hydrolysis of ATP coupled to the transport of lysophosphatidylserine, phosphatidylethanolamine, and phosphatidylserine from the lumenal to the cytosolic leaflet of the Golgi apparatus membrane and ensures the maintenance of asymmetric distribution of phospholipids. The sequence is that of Phospholipid-transporting ATPase neo1 from Schizosaccharomyces pombe (strain 972 / ATCC 24843) (Fission yeast).